We begin with the raw amino-acid sequence, 399 residues long: S-adenosylmethionine synthase (399 aa).

Position 17 (H17) interacts with ATP. D19 lines the Mg(2+) pocket. E45 lines the K(+) pocket. Residues E58 and Q101 each coordinate L-methionine. The flexible loop stretch occupies residues 101–111; the sequence is QSPDIAQGVDK. ATP contacts are provided by residues 176 to 178, 243 to 244, D252, 258 to 259, and K279; these read DGK, RF, and RK. D252 lines the L-methionine pocket. K283 lines the L-methionine pocket.

Belongs to the AdoMet synthase family. Homotetramer; dimer of dimers. Mg(2+) serves as cofactor. Requires K(+) as cofactor.

It localises to the cytoplasm. The enzyme catalyses L-methionine + ATP + H2O = S-adenosyl-L-methionine + phosphate + diphosphate. It functions in the pathway amino-acid biosynthesis; S-adenosyl-L-methionine biosynthesis; S-adenosyl-L-methionine from L-methionine: step 1/1. In terms of biological role, catalyzes the formation of S-adenosylmethionine (AdoMet) from methionine and ATP. The overall synthetic reaction is composed of two sequential steps, AdoMet formation and the subsequent tripolyphosphate hydrolysis which occurs prior to release of AdoMet from the enzyme. This Staphylococcus epidermidis (strain ATCC 35984 / DSM 28319 / BCRC 17069 / CCUG 31568 / BM 3577 / RP62A) protein is S-adenosylmethionine synthase.